The primary structure comprises 657 residues: Keratinocyte proline-rich protein (657 aa).

3 disordered regions span residues Gln285 to Arg320, His425 to Glu493, and Gln517 to Pro568. Over residues Thr292–Arg302 the composition is skewed to low complexity. A compositionally biased stretch (basic and acidic residues) spans Gln434 to Arg444. At Ser442 the chain carries Phosphoserine. Pro residues-rich tracts occupy residues Val449 to Glu493, Gln517 to Pro530, and Gly539 to Ser561.

It is found in the cytoplasm. This chain is Keratinocyte proline-rich protein, found in Mus musculus (Mouse).